The primary structure comprises 118 residues: Large ribosomal subunit protein bL20 (118 aa).

It belongs to the bacterial ribosomal protein bL20 family.

Functionally, binds directly to 23S ribosomal RNA and is necessary for the in vitro assembly process of the 50S ribosomal subunit. It is not involved in the protein synthesizing functions of that subunit. The sequence is that of Large ribosomal subunit protein bL20 from Thermus thermophilus (strain ATCC BAA-163 / DSM 7039 / HB27).